Reading from the N-terminus, the 188-residue chain is MGIDIRHNKDRKVRRKEPKSQDIYLRLLVKLYRFLARRTNSSFNRVVLKRLFMSRTNRPPLSMSRLIRKMKLPRRENKTAVVVGCITADVRIHDIPKLTVCALKLTSGARSRILKAGGQIMTFDQLALAAPKGQNTVLLSGPRKAREVYRHFGKAPSTPHSRTKPYVLSKGRKFERARGRRASRGYKN.

Residues 153 to 188 (GKAPSTPHSRTKPYVLSKGRKFERARGRRASRGYKN) are disordered. A compositionally biased stretch (basic residues) spans 178–188 (RGRRASRGYKN).

The protein belongs to the eukaryotic ribosomal protein eL18 family. Component of the large ribosomal subunit.

It localises to the cytoplasm. Component of the large ribosomal subunit. The ribosome is a large ribonucleoprotein complex responsible for the synthesis of proteins in the cell. The polypeptide is Large ribosomal subunit protein eL18A (rpl18-a) (Xenopus laevis (African clawed frog)).